Here is a 220-residue protein sequence, read N- to C-terminus: Fibroblast growth factor 3 (220 aa).

The first 19 residues, 1 to 19 (MLVIWLLLLALLPEPRVPA), serve as a signal peptide directing secretion. The disordered stretch occupies residues 19–40 (AATASPRAPRDAGGRGGVYEHL). The N-linked (GlcNAc...) asparagine glycan is linked to asparagine 66.

The protein belongs to the heparin-binding growth factors family.

The protein localises to the secreted. Its function is as follows. Plays an important role in the regulation of embryonic development, cell proliferation, and cell differentiation. The protein is Fibroblast growth factor 3 (FGF3) of Gallus gallus (Chicken).